A 1578-amino-acid polypeptide reads, in one-letter code: Pentafunctional AROM polypeptide (1578 aa).

Residues 1-384 (MAEPTKIKIL…YEPKASVVPN (384 aa)) form a 3-dehydroquinate synthase region. Residues 44–46 (DTN), 81–84 (EVSK), 114–116 (GGV), and Asp-119 each bind NAD(+). Position 130 (Arg-130) interacts with 7-phospho-2-dehydro-3-deoxy-D-arabino-heptonate. An NAD(+)-binding site is contributed by 139–140 (TT). Residues Asp-146 and Lys-152 each coordinate 7-phospho-2-dehydro-3-deoxy-D-arabino-heptonate. An NAD(+)-binding site is contributed by Lys-161. Asn-162 is a 7-phospho-2-dehydro-3-deoxy-D-arabino-heptonate binding site. NAD(+) is bound by residues 179–182 (FLET) and Asn-190. Zn(2+) is bound at residue Glu-194. Residues 194 to 197 (EVIK) and Lys-250 contribute to the 7-phospho-2-dehydro-3-deoxy-D-arabino-heptonate site. Residue Glu-260 is the Proton acceptor; for 3-dehydroquinate synthase activity of the active site. Residues 264-268 (RNLLN) and His-271 contribute to the 7-phospho-2-dehydro-3-deoxy-D-arabino-heptonate site. Position 271 (His-271) interacts with Zn(2+). His-275 functions as the Proton acceptor; for 3-dehydroquinate synthase activity in the catalytic mechanism. 7-phospho-2-dehydro-3-deoxy-D-arabino-heptonate contacts are provided by His-287 and Lys-356. His-287 contributes to the Zn(2+) binding site. The tract at residues 397-842 (VHPGVEPASN…WDTLRQKFSA (446 aa)) is EPSP synthase. The active-site For EPSP synthase activity is Cys-824. Residues 864–1055 (TASVFIIGMR…KRKKHSFFVS (192 aa)) form a shikimate kinase region. 871-878 (GMRGAGKT) contacts ATP. Positions 1056-1276 (LTLPDLRTAG…AAPGQLSATE (221 aa)) are 3-dehydroquinase. The Proton acceptor; for 3-dehydroquinate dehydratase activity role is filled by His-1179. The Schiff-base intermediate with substrate; for 3-dehydroquinate dehydratase activity role is filled by Lys-1207. Residues 1289–1578 (QKKFAVFGTP…EDARAAVLSS (290 aa)) are shikimate dehydrogenase.

In the N-terminal section; belongs to the sugar phosphate cyclases superfamily. Dehydroquinate synthase family. This sequence in the 2nd section; belongs to the EPSP synthase family. The protein in the 3rd section; belongs to the shikimate kinase family. It in the 4th section; belongs to the type-I 3-dehydroquinase family. In the C-terminal section; belongs to the shikimate dehydrogenase family. As to quaternary structure, homodimer. It depends on Zn(2+) as a cofactor.

The protein localises to the cytoplasm. The catalysed reaction is 7-phospho-2-dehydro-3-deoxy-D-arabino-heptonate = 3-dehydroquinate + phosphate. It catalyses the reaction 3-dehydroquinate = 3-dehydroshikimate + H2O. The enzyme catalyses shikimate + NADP(+) = 3-dehydroshikimate + NADPH + H(+). It carries out the reaction shikimate + ATP = 3-phosphoshikimate + ADP + H(+). The catalysed reaction is 3-phosphoshikimate + phosphoenolpyruvate = 5-O-(1-carboxyvinyl)-3-phosphoshikimate + phosphate. The protein operates within metabolic intermediate biosynthesis; chorismate biosynthesis; chorismate from D-erythrose 4-phosphate and phosphoenolpyruvate: step 2/7. It participates in metabolic intermediate biosynthesis; chorismate biosynthesis; chorismate from D-erythrose 4-phosphate and phosphoenolpyruvate: step 3/7. It functions in the pathway metabolic intermediate biosynthesis; chorismate biosynthesis; chorismate from D-erythrose 4-phosphate and phosphoenolpyruvate: step 4/7. Its pathway is metabolic intermediate biosynthesis; chorismate biosynthesis; chorismate from D-erythrose 4-phosphate and phosphoenolpyruvate: step 5/7. The protein operates within metabolic intermediate biosynthesis; chorismate biosynthesis; chorismate from D-erythrose 4-phosphate and phosphoenolpyruvate: step 6/7. Its function is as follows. The AROM polypeptide catalyzes 5 consecutive enzymatic reactions in prechorismate polyaromatic amino acid biosynthesis. This chain is Pentafunctional AROM polypeptide, found in Aspergillus flavus (strain ATCC 200026 / FGSC A1120 / IAM 13836 / NRRL 3357 / JCM 12722 / SRRC 167).